We begin with the raw amino-acid sequence, 40 residues long: Trypsin inhibitor (40 aa).

Monomer.

It carries out the reaction Preferential cleavage: Arg-|-Xaa, Lys-|-Xaa.. In terms of biological role, inhibits trypsin but not chymotrypsin, papain or porcine pancreatic alpha-amylase. Has insecticidal activity against A.aegypti. Functions by inhibiting the A.aegypti midgut proteases to reduce the survival of larva and adults. This Cassia leiandra (Marimari) protein is Trypsin inhibitor.